The following is a 509-amino-acid chain: Kynureninase 1 (509 aa).

Pyridoxal 5'-phosphate is bound by residues L154, T155, 183-186 (FPSD), D270, H273, and Y295. An N6-(pyridoxal phosphate)lysine modification is found at K296. Residues W345 and N373 each contribute to the pyridoxal 5'-phosphate site.

Belongs to the kynureninase family. In terms of assembly, homodimer. Pyridoxal 5'-phosphate is required as a cofactor.

The protein resides in the cytoplasm. It carries out the reaction L-kynurenine + H2O = anthranilate + L-alanine + H(+). The enzyme catalyses 3-hydroxy-L-kynurenine + H2O = 3-hydroxyanthranilate + L-alanine + H(+). It participates in amino-acid degradation; L-kynurenine degradation; L-alanine and anthranilate from L-kynurenine: step 1/1. The protein operates within cofactor biosynthesis; NAD(+) biosynthesis; quinolinate from L-kynurenine: step 2/3. Its function is as follows. Catalyzes the cleavage of L-kynurenine (L-Kyn) and L-3-hydroxykynurenine (L-3OHKyn) into anthranilic acid (AA) and 3-hydroxyanthranilic acid (3-OHAA), respectively. This Chaetomium globosum (strain ATCC 6205 / CBS 148.51 / DSM 1962 / NBRC 6347 / NRRL 1970) (Soil fungus) protein is Kynureninase 1.